A 373-amino-acid chain; its full sequence is Peroxisomal biogenesis factor 3 (373 aa).

Residues 1–15 are Cytoplasmic-facing; sequence MLRSMWNFLKRHKKK. The interval 1–45 is targeting to peroxisomes; the sequence is MLRSMWNFLKRHKKKCIFLGTVLGGVYILGKYGQKKIREIQEREA. Residues 16–36 form a helical membrane-spanning segment; that stretch reads CIFLGTVLGGVYILGKYGQKK. The Peroxisomal segment spans residues 37–116; it reads IREIQEREAA…LKIISFTRSI (80 aa). A helical transmembrane segment spans residues 117–140; that stretch reads VAVYSTCMLVVLLRVQLNIIGGYI. An interaction with PEX19 region spans residues 120–136; the sequence is YSTCMLVVLLRVQLNII. Over 141–373 the chain is Cytoplasmic; the sequence is YLDNATVGKN…AFSTPQQLEK (233 aa).

The protein belongs to the peroxin-3 family. Interacts with PEX19.

It is found in the peroxisome membrane. Its function is as follows. Involved in peroxisome biosynthesis and integrity. Assembles membrane vesicles before the matrix proteins are translocated. As a docking factor for PEX19, is necessary for the import of peroxisomal membrane proteins in the peroxisomes. This chain is Peroxisomal biogenesis factor 3 (PEX3), found in Cricetulus longicaudatus (Long-tailed dwarf hamster).